The primary structure comprises 332 residues: DNA-directed RNA polymerase subunit alpha (332 aa).

Residues 1–227 form an alpha N-terminal domain (alpha-NTD) region; the sequence is MKKFAETPFL…VMYSQMSVFN (227 aa). Positions 248–332 are alpha C-terminal domain (alpha-CTD); that stretch reads KELVIRIDDL…LRRKLEQLKA (85 aa).

This sequence belongs to the RNA polymerase alpha chain family. As to quaternary structure, homodimer. The RNAP catalytic core consists of 2 alpha, 1 beta, 1 beta' and 1 omega subunit. When a sigma factor is associated with the core the holoenzyme is formed, which can initiate transcription.

The catalysed reaction is RNA(n) + a ribonucleoside 5'-triphosphate = RNA(n+1) + diphosphate. In terms of biological role, DNA-dependent RNA polymerase catalyzes the transcription of DNA into RNA using the four ribonucleoside triphosphates as substrates. The polypeptide is DNA-directed RNA polymerase subunit alpha (Aliarcobacter butzleri (strain RM4018) (Arcobacter butzleri)).